Consider the following 900-residue polypeptide: Alanine--tRNA ligase (900 aa).

The Zn(2+) site is built by histidine 604, histidine 608, cysteine 708, and histidine 712.

It belongs to the class-II aminoacyl-tRNA synthetase family. Requires Zn(2+) as cofactor.

Its subcellular location is the cytoplasm. It catalyses the reaction tRNA(Ala) + L-alanine + ATP = L-alanyl-tRNA(Ala) + AMP + diphosphate. Functionally, catalyzes the attachment of alanine to tRNA(Ala) in a two-step reaction: alanine is first activated by ATP to form Ala-AMP and then transferred to the acceptor end of tRNA(Ala). Also edits incorrectly charged Ser-tRNA(Ala) and Gly-tRNA(Ala) via its editing domain. This chain is Alanine--tRNA ligase, found in Saccharolobus islandicus (strain M.14.25 / Kamchatka #1) (Sulfolobus islandicus).